A 477-amino-acid polypeptide reads, in one-letter code: E3 ubiquitin-protein ligase TRIM17 (477 aa).

The RING-type zinc-finger motif lies at 16–66 (CSICLDYFTDPVMTACGHNFCRECIQMSWEKGKGKKGKKKQKGSFPCPECR). The B box-type zinc-finger motif lies at 94–135 (HKRDLCQIHQEPLKLFCQDDQTPICVVCREAQEHRMHRVLPL). Residues Cys99, His102, Cys121, and His127 each contribute to the Zn(2+) site. The stretch at 135–225 (LDEAAREYKL…GKLQDSKASL (91 aa)) forms a coiled coil. The 200-residue stretch at 276–475 (AIKTVCRVPG…MVISTVTMWV (200 aa)) folds into the B30.2/SPRY domain.

This sequence belongs to the TRIM/RBCC family. Interacts (via coiled coil) with TRIM44 (via coiled coil). Interacts with TRIM28; this interaction prevents TRIM28 activity on BCL2A1. Interacts with TRIM41; this interaction prevents TRIM41 activity on ZSCAN2. Interacts with BECN1. Interacts with NFATC3 and NFATC4; these interactions prevent NFATC3 and NFATC4 nuclear localization. Auto-ubiquitinated. Expressed almost exclusively in the testis.

The protein resides in the cytoplasm. It localises to the lysosome. The enzyme catalyses S-ubiquitinyl-[E2 ubiquitin-conjugating enzyme]-L-cysteine + [acceptor protein]-L-lysine = [E2 ubiquitin-conjugating enzyme]-L-cysteine + N(6)-ubiquitinyl-[acceptor protein]-L-lysine.. The protein operates within protein modification; protein ubiquitination. In terms of biological role, E3 ubiquitin ligase that plays important roles in the regulation of neuronal apoptosis, selective autophagy or cell proliferation. Stimulates the degradation of kinetochore ZW10 interacting protein ZWINT in a proteasome-dependent manner, leading to negative regulation of cell proliferation. Inhibits autophagic degradation of diverse known targets while contributing to autophagy of midbodies. Autophagy-inhibitory activity involves MCL1, which TRIM17 assembles into complexes with the key autophagy regulator BECN1. Controls neuronal apoptosis by mediating ubiquitination and degradation of MCL1 to initiate neuronal death. In addition, regulates NFAT transcription factors NFATC3 and NFATC4 activities by preventing their nuclear localization, thus inhibiting their transcriptional activities. Decreases TRIM41-mediated degradation of ZSCAN2 thereby stimulating alpha-synuclein/SNCA transcription in neuronal cells. Prevents the E3 ubiquitin-ligase activity of TRIM28 and its interaction with anti-apoptotic BCL2A1, blocking TRIM28 from ubiquitinating BCL2A1. The chain is E3 ubiquitin-protein ligase TRIM17 (Trim17) from Rattus norvegicus (Rat).